A 64-amino-acid polypeptide reads, in one-letter code: MPKLKTNRGAVKRFKVTGSGKIKRAASNHNHMLTKKSQKRKRRLRKIHEVAPSDMRAVSEMLRD.

Belongs to the bacterial ribosomal protein bL35 family.

The sequence is that of Large ribosomal subunit protein bL35 from Coxiella burnetii (strain RSA 331 / Henzerling II).